The sequence spans 243 residues: 1-(5-phosphoribosyl)-5-[(5-phosphoribosylamino)methylideneamino] imidazole-4-carboxamide isomerase (243 aa).

Aspartate 10 serves as the catalytic Proton acceptor. The Proton donor role is filled by aspartate 131.

Belongs to the HisA/HisF family.

It localises to the cytoplasm. The catalysed reaction is 1-(5-phospho-beta-D-ribosyl)-5-[(5-phospho-beta-D-ribosylamino)methylideneamino]imidazole-4-carboxamide = 5-[(5-phospho-1-deoxy-D-ribulos-1-ylimino)methylamino]-1-(5-phospho-beta-D-ribosyl)imidazole-4-carboxamide. It functions in the pathway amino-acid biosynthesis; L-histidine biosynthesis; L-histidine from 5-phospho-alpha-D-ribose 1-diphosphate: step 4/9. This chain is 1-(5-phosphoribosyl)-5-[(5-phosphoribosylamino)methylideneamino] imidazole-4-carboxamide isomerase, found in Rhizorhabdus wittichii (strain DSM 6014 / CCUG 31198 / JCM 15750 / NBRC 105917 / EY 4224 / RW1) (Sphingomonas wittichii).